Reading from the N-terminus, the 91-residue chain is Small ribosomal subunit protein uS15 (91 aa).

It belongs to the universal ribosomal protein uS15 family. In terms of assembly, part of the 30S ribosomal subunit. Forms a bridge to the 50S subunit in the 70S ribosome, contacting the 23S rRNA.

Its function is as follows. One of the primary rRNA binding proteins, it binds directly to 16S rRNA where it helps nucleate assembly of the platform of the 30S subunit by binding and bridging several RNA helices of the 16S rRNA. Forms an intersubunit bridge (bridge B4) with the 23S rRNA of the 50S subunit in the ribosome. This is Small ribosomal subunit protein uS15 from Rickettsia peacockii (strain Rustic).